A 116-amino-acid chain; its full sequence is Large ribosomal subunit protein bL19 (116 aa).

Belongs to the bacterial ribosomal protein bL19 family.

Functionally, this protein is located at the 30S-50S ribosomal subunit interface and may play a role in the structure and function of the aminoacyl-tRNA binding site. The polypeptide is Large ribosomal subunit protein bL19 (Flavobacterium psychrophilum (strain ATCC 49511 / DSM 21280 / CIP 103535 / JIP02/86)).